A 375-amino-acid chain; its full sequence is Carbamoyl phosphate synthase small chain (375 aa).

The segment at 1 to 185 (MTQPAILVLE…LNANAFVQAE (185 aa)) is CPSase. Positions 47, 237, and 239 each coordinate L-glutamine. The 187-residue stretch at 189–375 (KVVAYDYGVK…FVASMAEAKS (187 aa)) folds into the Glutamine amidotransferase type-1 domain. Cysteine 265 acts as the Nucleophile in catalysis. Positions 266, 269, 307, 309, and 310 each coordinate L-glutamine. Active-site residues include histidine 349 and glutamate 351.

It belongs to the CarA family. As to quaternary structure, composed of two chains; the small (or glutamine) chain promotes the hydrolysis of glutamine to ammonia, which is used by the large (or ammonia) chain to synthesize carbamoyl phosphate. Tetramer of heterodimers (alpha,beta)4.

The catalysed reaction is hydrogencarbonate + L-glutamine + 2 ATP + H2O = carbamoyl phosphate + L-glutamate + 2 ADP + phosphate + 2 H(+). The enzyme catalyses L-glutamine + H2O = L-glutamate + NH4(+). Its pathway is amino-acid biosynthesis; L-arginine biosynthesis; carbamoyl phosphate from bicarbonate: step 1/1. The protein operates within pyrimidine metabolism; UMP biosynthesis via de novo pathway; (S)-dihydroorotate from bicarbonate: step 1/3. Small subunit of the glutamine-dependent carbamoyl phosphate synthetase (CPSase). CPSase catalyzes the formation of carbamoyl phosphate from the ammonia moiety of glutamine, carbonate, and phosphate donated by ATP, constituting the first step of 2 biosynthetic pathways, one leading to arginine and/or urea and the other to pyrimidine nucleotides. The small subunit (glutamine amidotransferase) binds and cleaves glutamine to supply the large subunit with the substrate ammonia. This is Carbamoyl phosphate synthase small chain from Xanthomonas campestris pv. campestris (strain ATCC 33913 / DSM 3586 / NCPPB 528 / LMG 568 / P 25).